The primary structure comprises 103 residues: Histone H4 (103 aa).

The segment covering 1–14 (MSGRGKGGKGLGKG) has biased composition (gly residues). The interval 1–20 (MSGRGKGGKGLGKGGAKRHR) is disordered. The DNA-binding element occupies 17–21 (KRHRK).

It belongs to the histone H4 family. The nucleosome is a histone octamer containing two molecules each of H2A, H2B, H3 and H4 assembled in one H3-H4 heterotetramer and two H2A-H2B heterodimers. The octamer wraps approximately 147 bp of DNA.

The protein resides in the nucleus. The protein localises to the chromosome. Core component of nucleosome. Nucleosomes wrap and compact DNA into chromatin, limiting DNA accessibility to the cellular machineries which require DNA as a template. Histones thereby play a central role in transcription regulation, DNA repair, DNA replication and chromosomal stability. DNA accessibility is regulated via a complex set of post-translational modifications of histones, also called histone code, and nucleosome remodeling. This chain is Histone H4 (H4-I), found in Volvox carteri (Green alga).